The following is a 238-amino-acid chain: Opacity protein opA60 (238 aa).

A signal peptide is located at residue Ala1.

The protein belongs to the opacity porin family.

It localises to the cell outer membrane. Functionally, implicated in a number of adherence functions. OPA proteins are implicated in pathogenesis and are subject to phase variation. The protein is Opacity protein opA60 (opaH) of Neisseria gonorrhoeae.